The sequence spans 297 residues: Coiled-coil domain-containing protein 196 (297 aa).

The stretch at 83-117 forms a coiled coil; sequence ESSVMELLKEAEEMKQNLERKNKMLRKEMEMLWNK. The disordered stretch occupies residues 122–161; the sequence is EELSDQQKAPQTKNKADLQDGKAPKSPSSPRKTESELEKS. 2 stretches are compositionally biased toward basic and acidic residues: residues 135–144 and 152–161; these read NKADLQDGKA and RKTESELEKS.

The chain is Coiled-coil domain-containing protein 196 from Homo sapiens (Human).